Here is a 116-residue protein sequence, read N- to C-terminus: EDHPVHNLGEHSVCDSVSAWVTKTTATDIKGNTVTVMENVNLDNKVYKEYFFETKCKNPNPEPSGCRGIDSSHWNSYCTETDTFIKALTMEGNQASWRFIRIETACVCVITKKKGN.

3 disulfides stabilise this stretch: Cys14-Cys78, Cys56-Cys106, and Cys66-Cys108. Lys86 contacts a 1,2-diacyl-sn-glycerol.

Belongs to the NGF-beta family. Homodimer; non-covalently linked. Interacts with NTRK1. Not glycosylated. Expressed by the venom gland.

The protein resides in the secreted. Its function is as follows. Nerve growth factor is important for the development and maintenance of the sympathetic and sensory nervous systems. It stimulates division and differentiation of sympathetic and embryonic sensory neurons as well as basal forebrain cholinergic neurons in the brain. Its relevance in the snake venom is not clear. However, it has been shown to inhibit metalloproteinase-dependent proteolysis of platelet glycoprotein Ib alpha, suggesting a metalloproteinase inhibition to prevent metalloprotease autodigestion and/or protection against prey proteases. Binds a lipid between the two protein chains in the homodimer. The lipid-bound form promotes histamine relase from mouse mast cells, contrary to the lipid-free form. The polypeptide is Venom nerve growth factor (Naja atra (Chinese cobra)).